A 209-amino-acid chain; its full sequence is Probable L-serine dehydratase, alpha chain (209 aa).

Belongs to the iron-sulfur dependent L-serine dehydratase family. As to quaternary structure, heterodimer of an alpha chain and a beta chain. The cofactor is [4Fe-4S] cluster.

It carries out the reaction L-serine = pyruvate + NH4(+). It participates in carbohydrate biosynthesis; gluconeogenesis. The sequence is that of Probable L-serine dehydratase, alpha chain (sdhA) from Latilactobacillus sakei (Lactobacillus sakei).